Here is a 90-residue protein sequence, read N- to C-terminus: Small ribosomal subunit protein uS15c (90 aa).

The protein belongs to the universal ribosomal protein uS15 family. As to quaternary structure, part of the 30S ribosomal subunit.

Its subcellular location is the plastid. The protein localises to the chloroplast. In Morus indica (Mulberry), this protein is Small ribosomal subunit protein uS15c (rps15).